Consider the following 282-residue polypeptide: Tryptophan 2,3-dioxygenase (282 aa).

Residues Phe-51–His-55, Tyr-113, and Arg-117 each bind substrate. His-240 is a heme binding site. Thr-254 provides a ligand contact to substrate.

Belongs to the tryptophan 2,3-dioxygenase family. As to quaternary structure, homotetramer. Heme is required as a cofactor.

It carries out the reaction L-tryptophan + O2 = N-formyl-L-kynurenine. The protein operates within amino-acid degradation; L-tryptophan degradation via kynurenine pathway; L-kynurenine from L-tryptophan: step 1/2. Its function is as follows. Heme-dependent dioxygenase that catalyzes the oxidative cleavage of the L-tryptophan (L-Trp) pyrrole ring and converts L-tryptophan to N-formyl-L-kynurenine. Catalyzes the oxidative cleavage of the indole moiety. The protein is Tryptophan 2,3-dioxygenase of Polaromonas naphthalenivorans (strain CJ2).